The following is a 515-amino-acid chain: UDP-glucosyltransferase 2 (515 aa).

The N-terminal stretch at Met-1–Gly-20 is a signal peptide. Residues Ala-21–Gln-471 are Lumenal-facing. N-linked (GlcNAc...) asparagine glycosylation is found at Asn-51, Asn-236, and Asn-303. Residues Tyr-472–Val-492 form a helical membrane-spanning segment. The Cytoplasmic segment spans residues Lys-493–Asn-515.

The protein belongs to the UDP-glycosyltransferase family. In terms of processing, glycosylated.

Its subcellular location is the endoplasmic reticulum membrane. The catalysed reaction is kermesate + UDP-alpha-D-glucose = carminate + UDP + 2 H(+). It catalyses the reaction flavokermesate + UDP-alpha-D-glucose = flavokermesate 7-C-beta-D-glucoside + UDP + 2 H(+). Functionally, membrane-bound UDP-glucosyltransferase (UGT) which catalyzes the C-glucosylation of kermesate and flavokermesate to produce carminate and flavokermesate 7-C-beta-D-glucoside (dcll) respectively. Carminate is used as a deterrent against insect predators. The chain is UDP-glucosyltransferase 2 from Dactylopius coccus (Cochineal).